Here is a 569-residue protein sequence, read N- to C-terminus: Putative ABC transporter ATP-binding protein TTE1589 (569 aa).

2 consecutive ABC transporter domains span residues 8-248 (IIVK…IGLM) and 309-542 (IQAK…LSLK). ATP contacts are provided by residues 43–50 (GPSGAGKS) and 342–349 (GHNGSGKT).

Belongs to the ABC transporter superfamily.

Its subcellular location is the cell membrane. Functionally, probably part of an ABC transporter complex. Responsible for energy coupling to the transport system. This Caldanaerobacter subterraneus subsp. tengcongensis (strain DSM 15242 / JCM 11007 / NBRC 100824 / MB4) (Thermoanaerobacter tengcongensis) protein is Putative ABC transporter ATP-binding protein TTE1589.